We begin with the raw amino-acid sequence, 273 residues long: MSEYTKQITRLISEVRSKKPLIHNITNYVTVNDCANVTLAIGASPIMADDIDEAADITSISSALVINIGTLNKRTIESMILSGKKANEKGIPVIFDPVGAGASALRNETTSTILDKIKISVLRGNLSEISYIAGRNASTKGVDASEADIQSNDSIAVAKAAAVKLGCVVAVTGAVDVISDGKNVVTVLNGHKMLSNVTGTGCMTTALVGSFCGAVKDYFKAAVAGVTVMGISGEIAYEAAGHKGTGSYHIAIIDAISRMDENIFGEKARINEI.

Met-47 contributes to the substrate binding site. ATP is bound by residues Arg-123 and Thr-172. Residue Gly-199 coordinates substrate.

It belongs to the Thz kinase family. It depends on Mg(2+) as a cofactor.

The enzyme catalyses 5-(2-hydroxyethyl)-4-methylthiazole + ATP = 4-methyl-5-(2-phosphooxyethyl)-thiazole + ADP + H(+). It participates in cofactor biosynthesis; thiamine diphosphate biosynthesis; 4-methyl-5-(2-phosphoethyl)-thiazole from 5-(2-hydroxyethyl)-4-methylthiazole: step 1/1. Its function is as follows. Catalyzes the phosphorylation of the hydroxyl group of 4-methyl-5-beta-hydroxyethylthiazole (THZ). The polypeptide is Hydroxyethylthiazole kinase (Ruminiclostridium cellulolyticum (strain ATCC 35319 / DSM 5812 / JCM 6584 / H10) (Clostridium cellulolyticum)).